Reading from the N-terminus, the 251-residue chain is 1-(5-phosphoribosyl)-5-[(5-phosphoribosylamino)methylideneamino] imidazole-4-carboxamide isomerase (251 aa).

Asp8 (proton acceptor) is an active-site residue. The active-site Proton donor is the Asp131.

It belongs to the HisA/HisF family.

The protein resides in the cytoplasm. The catalysed reaction is 1-(5-phospho-beta-D-ribosyl)-5-[(5-phospho-beta-D-ribosylamino)methylideneamino]imidazole-4-carboxamide = 5-[(5-phospho-1-deoxy-D-ribulos-1-ylimino)methylamino]-1-(5-phospho-beta-D-ribosyl)imidazole-4-carboxamide. It functions in the pathway amino-acid biosynthesis; L-histidine biosynthesis; L-histidine from 5-phospho-alpha-D-ribose 1-diphosphate: step 4/9. This chain is 1-(5-phosphoribosyl)-5-[(5-phosphoribosylamino)methylideneamino] imidazole-4-carboxamide isomerase, found in Burkholderia vietnamiensis (strain G4 / LMG 22486) (Burkholderia cepacia (strain R1808)).